Consider the following 188-residue polypeptide: UPF0397 protein LCK_00164 (188 aa).

5 helical membrane-spanning segments follow: residues 15–35 (VVATGIGAAVFFVLMKFIAIP), 48–68 (GWLALIAGLFGPVVGLLVGLI), 79–99 (GAPWWSWVIADGVFGLLLGFG), 121–141 (WQAVSNVLVWVIIAPLGDIII), and 154–174 (AVTTVVNTISVAIIGSLLLVA).

Belongs to the UPF0397 family.

It localises to the cell membrane. In Leuconostoc citreum (strain KM20), this protein is UPF0397 protein LCK_00164.